We begin with the raw amino-acid sequence, 555 residues long: CTP synthase (555 aa).

The interval 1 to 279 (MATNRAKSST…DNYIIRRLNL (279 aa)) is amidoligase domain. Residue Ser21 participates in CTP binding. Ser21 contributes to the UTP binding site. Residues 22–27 (SLGKGL) and Asp79 each bind ATP. 2 residues coordinate Mg(2+): Asp79 and Glu153. Residues 160–162 (DIE), 200–205 (KTKPTQ), and Lys236 contribute to the CTP site. UTP-binding positions include 200-205 (KTKPTQ) and Lys236. The 250-residue stretch at 304–553 (TIGIVGKYID…VDAALKHQAG (250 aa)) folds into the Glutamine amidotransferase type-1 domain. Gly367 provides a ligand contact to L-glutamine. Cys394 functions as the Nucleophile; for glutamine hydrolysis in the catalytic mechanism. L-glutamine is bound by residues 395-398 (LGLQ), Glu417, and Arg478. Residues His526 and Glu528 contribute to the active site.

It belongs to the CTP synthase family. Homotetramer.

The catalysed reaction is UTP + L-glutamine + ATP + H2O = CTP + L-glutamate + ADP + phosphate + 2 H(+). It carries out the reaction L-glutamine + H2O = L-glutamate + NH4(+). It catalyses the reaction UTP + NH4(+) + ATP = CTP + ADP + phosphate + 2 H(+). Its pathway is pyrimidine metabolism; CTP biosynthesis via de novo pathway; CTP from UDP: step 2/2. With respect to regulation, allosterically activated by GTP, when glutamine is the substrate; GTP has no effect on the reaction when ammonia is the substrate. The allosteric effector GTP functions by stabilizing the protein conformation that binds the tetrahedral intermediate(s) formed during glutamine hydrolysis. Inhibited by the product CTP, via allosteric rather than competitive inhibition. Catalyzes the ATP-dependent amination of UTP to CTP with either L-glutamine or ammonia as the source of nitrogen. Regulates intracellular CTP levels through interactions with the four ribonucleotide triphosphates. In Corynebacterium jeikeium (strain K411), this protein is CTP synthase.